Consider the following 250-residue polypeptide: Glycerol uptake facilitator protein-like 5 (250 aa).

A run of 2 helical transmembrane segments spans residues 12–32 and 46–66; these read EFFG…NAFL and GGWL…AMMF. Positions 75-77 match the NPA 1 motif; sequence NPA. Transmembrane regions (helical) follow at residues 85-105, 142-162, and 172-192; these read IGIF…LGAI, LNGF…AMGL, and IDIA…SLGG. Residues 199 to 201 carry the NPA 2 motif; that stretch reads NPA. A helical transmembrane segment spans residues 230–250; it reads VVAPIVGAVIGIWIYKIFFGL.

Belongs to the MIP/aquaporin (TC 1.A.8) family.

It localises to the cell membrane. Functionally, probable transporter that facilitates the transmembrane diffusion of an unknown substrate. Is not permeable to water, dihydroxyacetone, glycerol, urea, H(2)O(2) and D/L-lactic acid. The sequence is that of Glycerol uptake facilitator protein-like 5 from Lactiplantibacillus plantarum (strain ATCC BAA-793 / NCIMB 8826 / WCFS1) (Lactobacillus plantarum).